The chain runs to 251 residues: Cytochrome P450 monooxygenase ppzG (251 aa).

Residue Cys-250 participates in heme binding.

The protein belongs to the cytochrome P450 family. It depends on heme as a cofactor.

It functions in the pathway secondary metabolite biosynthesis. In terms of biological role, cytochrome P450 monooxygenase; part of the gene cluster that mediates the biosynthesis of pyrrolopyrazines, secondary metabolites showing insecticidal activity. The role of ppzG within the pathway has still to be determined. The single multifunctional NRPS ppzA is sufficient to produce peramine via condensation of 1-pyrroline-5-carboxylate and arginine, N-methylation of the alpha-amino group of arginine and reduction of the thioester and the cyclization to form an iminium ion resulting in release from the peptide synthetase. Deprotonation of this intermediate and oxidation of the pyrroline ring would give rise to peramine. In Epichloe species that produce only peramine, the peramine synthetase gene is not localized in a gene cluster, in contrast to Metarhizium species that contain additional pyrrolopyrazine biosynthesis genes. The 2-oxoglutarate-Fe(II) type oxidoreductase ppzC hydroxylates peramine to yield the newly identified compound 8-hydroxyperamine whereas ppzD converts L-proline into trans-4-hydroxy-L-proline, a precursor of peramine biosynthesis. This chain is Cytochrome P450 monooxygenase ppzG, found in Metarhizium rileyi (strain RCEF 4871) (Nomuraea rileyi).